Consider the following 159-residue polypeptide: RNA pyrophosphohydrolase (159 aa).

The region spanning 6–149 (GFRPNVGIIL…KREVYRRALK (144 aa)) is the Nudix hydrolase domain. Residues 38–59 (GGINPDETPEDALYRELNEEVG) carry the Nudix box motif.

Belongs to the Nudix hydrolase family. RppH subfamily. A divalent metal cation is required as a cofactor.

Accelerates the degradation of transcripts by removing pyrophosphate from the 5'-end of triphosphorylated RNA, leading to a more labile monophosphorylated state that can stimulate subsequent ribonuclease cleavage. This Pseudomonas putida (strain ATCC 700007 / DSM 6899 / JCM 31910 / BCRC 17059 / LMG 24140 / F1) protein is RNA pyrophosphohydrolase.